Reading from the N-terminus, the 369-residue chain is Probable dual-specificity RNA methyltransferase RlmN (369 aa).

The active-site Proton acceptor is the glutamate 108. In terms of domain architecture, Radical SAM core spans 114–351 (YPDRATLCIS…IAQGVSCTVR (238 aa)). A disulfide bond links cysteine 121 and cysteine 362. The [4Fe-4S] cluster site is built by cysteine 128, cysteine 132, and cysteine 135. S-adenosyl-L-methionine contacts are provided by residues 183-184 (GE), serine 217, 240-242 (SLH), and asparagine 319. Cysteine 362 acts as the S-methylcysteine intermediate in catalysis.

Belongs to the radical SAM superfamily. RlmN family. Requires [4Fe-4S] cluster as cofactor.

It localises to the cytoplasm. It catalyses the reaction adenosine(2503) in 23S rRNA + 2 reduced [2Fe-2S]-[ferredoxin] + 2 S-adenosyl-L-methionine = 2-methyladenosine(2503) in 23S rRNA + 5'-deoxyadenosine + L-methionine + 2 oxidized [2Fe-2S]-[ferredoxin] + S-adenosyl-L-homocysteine. It carries out the reaction adenosine(37) in tRNA + 2 reduced [2Fe-2S]-[ferredoxin] + 2 S-adenosyl-L-methionine = 2-methyladenosine(37) in tRNA + 5'-deoxyadenosine + L-methionine + 2 oxidized [2Fe-2S]-[ferredoxin] + S-adenosyl-L-homocysteine. Functionally, specifically methylates position 2 of adenine 2503 in 23S rRNA and position 2 of adenine 37 in tRNAs. This is Probable dual-specificity RNA methyltransferase RlmN from Rhodococcus erythropolis (strain PR4 / NBRC 100887).